Here is a 579-residue protein sequence, read N- to C-terminus: 2-isopropylmalate synthase (579 aa).

The region spanning 40–314 is the Pyruvate carboxyltransferase domain; sequence PRWCAVDLRD…DPMIDFSDID (275 aa). Residues aspartate 49, histidine 253, histidine 255, and asparagine 289 each coordinate Mg(2+). The regulatory domain stretch occupies residues 456–579; it reads SSKEDGQWGR…VNRAIRDAQA (124 aa).

The protein belongs to the alpha-IPM synthase/homocitrate synthase family. LeuA type 2 subfamily. As to quaternary structure, homodimer. Mg(2+) is required as a cofactor.

The protein localises to the cytoplasm. The enzyme catalyses 3-methyl-2-oxobutanoate + acetyl-CoA + H2O = (2S)-2-isopropylmalate + CoA + H(+). The protein operates within amino-acid biosynthesis; L-leucine biosynthesis; L-leucine from 3-methyl-2-oxobutanoate: step 1/4. In terms of biological role, catalyzes the condensation of the acetyl group of acetyl-CoA with 3-methyl-2-oxobutanoate (2-ketoisovalerate) to form 3-carboxy-3-hydroxy-4-methylpentanoate (2-isopropylmalate). This Arthrobacter sp. (strain FB24) protein is 2-isopropylmalate synthase.